Here is a 127-residue protein sequence, read N- to C-terminus: SH2 domain-containing protein 1A (127 aa).

An SH2 domain is found at 6 to 102; that stretch reads VYHGKISRET…GIVIPLQYPV (97 aa). An interaction with FYN SH3 domain region spans residues 67 to 92; the sequence is ETAPGVHKRYFRKIKNLISAFQKPDQ. At Lys89 the chain carries N6-acetyllysine. The segment at 104-127 is disordered; that stretch reads KSSPRSTQGTTGIREDPDVCLKAP. A compositionally biased stretch (basic and acidic residues) spans 116–127; sequence IREDPDVCLKAP.

In terms of assembly, interacts with CD84, CD244, LY9, SLAMF1 and FYN. Interacts with NTRK1, NTRK2 and NTRK3.

Its subcellular location is the cytoplasm. Its function is as follows. Cytoplasmic adapter regulating receptors of the signaling lymphocytic activation molecule (SLAM) family such as SLAMF1, CD244, LY9, CD84, SLAMF6 and SLAMF7. In SLAM signaling seems to cooperate with SH2D1B/EAT-2. Initially it has been proposed that association with SLAMF1 prevents SLAMF1 binding to inhibitory effectors including INPP5D/SHIP1 and PTPN11/SHP-2. However, by simultaneous interactions, recruits FYN which subsequently phosphorylates and activates SLAMF1. Positively regulates CD244/2B4- and CD84-mediated natural killer (NK) cell functions. Can also promote CD48-, SLAMF6 -, LY9-, and SLAMF7-mediated NK cell activation. In the context of NK cell-mediated cytotoxicity enhances conjugate formation with target cells. May also regulate the activity of the neurotrophin receptors NTRK1, NTRK2 and NTRK3. This is SH2 domain-containing protein 1A (SH2D1A) from Saguinus oedipus (Cotton-top tamarin).